Here is a 23-residue protein sequence, read N- to C-terminus: DSPGGASDTQKQHXVNSXXXKXY.

The segment at 1 to 23 (DSPGGASDTQKQHXVNSXXXKXY) is disordered.

Belongs to the tyrosinase family. Hemocyanin subfamily. Hemolymph.

The protein localises to the secreted. It is found in the extracellular space. Functionally, hemocyanins are copper-containing oxygen carriers occurring freely dissolved in the hemolymph of many mollusks and arthropods. The polypeptide is Hemocyanin subunit 1 (Cancer pagurus (Rock crab)).